We begin with the raw amino-acid sequence, 605 residues long: Aspartate--tRNA(Asp/Asn) ligase (605 aa).

Glu-186 contributes to the L-aspartate binding site. An aspartate region spans residues 210-213 (QQFK). Positions 232 and 460 each coordinate L-aspartate. An ATP-binding site is contributed by 232 to 234 (RDE). Position 494 (Glu-494) interacts with ATP. L-aspartate is bound at residue Arg-501. An ATP-binding site is contributed by 546-549 (GLDR).

This sequence belongs to the class-II aminoacyl-tRNA synthetase family. Type 1 subfamily. Homodimer.

It is found in the cytoplasm. The enzyme catalyses tRNA(Asx) + L-aspartate + ATP = L-aspartyl-tRNA(Asx) + AMP + diphosphate. In terms of biological role, aspartyl-tRNA synthetase with relaxed tRNA specificity since it is able to aspartylate not only its cognate tRNA(Asp) but also tRNA(Asn). Reaction proceeds in two steps: L-aspartate is first activated by ATP to form Asp-AMP and then transferred to the acceptor end of tRNA(Asp/Asn). The polypeptide is Aspartate--tRNA(Asp/Asn) ligase (Chlorobium chlorochromatii (strain CaD3)).